The primary structure comprises 459 residues: Protein maelstrom (459 aa).

The HMG box DNA-binding region spans alanine 2 to asparagine 69. The segment at asparagine 43–glutamine 78 is disordered. The segment covering alanine 63 to glutamine 78 has biased composition (basic and acidic residues).

It belongs to the maelstrom family. In germaria and egg chambers, it is detected in the germline. In the germarium, it is in all regions, including region I where the germ cells are dividing. In early egg chambers, it is uniformly distributed throughout the nurse cells and oocyte but, by stage 5, it is most concentrated around the outer margins of the cells, closest to the periphery of the egg chamber. Level decreases in stages 5 and 6, but most noticeably in the oocyte, where protein level remains. No detectable protein from stage 8 onward (at protein level).

The protein resides in the cytoplasm. It localises to the nucleus. The protein localises to the perinuclear region. It is found in the cytoplasmic ribonucleoprotein granule. Its function is as follows. Involved both in the piRNA and miRNA metabolic processes. As a component of the meiotic nuage, plays a central role during oogenesis by repressing transposable elements and preventing their mobilization, which is essential for the germline integrity. Repression of transposable elements is mediated via the piRNA metabolic process, which mediates the repression of transposable elements during meiosis by forming complexes composed of piRNAs and Piwi proteins and governs the repression of transposons. As a nuclear component, it is required for proper differentiation in the germline stem cell (GSC) lineage by repressing microRNA-7 (miR-7), thereby acting as an indirect regulator of bag-of-marbles (Bam). Acts by binding to the promoter of miR-7 gene and repressing its expression; miR-7 repression alleviates the Bam repression by miR-7, thereby allowing differentiation in the germline stem cell (GSC) lineage. Indirectly required to position the microtubule organizing center in stage 2-6 oocytes. Involved in repression of long interspersed nuclear elements (LINEs) including HeT-A, I-element, TART and possibly mst40 LINEs; may have a role in production of piwi-interacting RNA (piRNA). The polypeptide is Protein maelstrom (Drosophila melanogaster (Fruit fly)).